The sequence spans 384 residues: Sialyltransferase-like protein 3 (384 aa).

The Cytoplasmic portion of the chain corresponds to 1-5 (MKRRH). The chain crosses the membrane as a helical; Signal-anchor for type II membrane protein span at residues 6 to 26 (WSHPSCGLLLLVAVFCLLLVF). Topologically, residues 27–384 (RCSQLRHSGD…FRLPPVSFYR (358 aa)) are lumenal. Residue asparagine 241 is glycosylated (N-linked (GlcNAc...) asparagine).

It belongs to the glycosyltransferase 29 family.

The protein resides in the golgi apparatus membrane. In terms of biological role, possesses sialyltransferase-like activity in vitro. Transfers sialic acid to the glycoprotein asialofetuin. The transferred sialic acid is linked to galactose of Gal-beta-1,3-GalNAc through alpha-2,6-linkage. This Oryza sativa subsp. indica (Rice) protein is Sialyltransferase-like protein 3.